Here is a 1406-residue protein sequence, read N- to C-terminus: DNA topoisomerase 2 (1406 aa).

ATP-binding positions include Asn-69, Asn-98, 126-128 (SSN), and 139-146 (GRNGYGAK). The interval 332 to 334 (KKK) is interaction with DNA. Residue 363-365 (QTK) coordinates ATP. Positions 441 to 555 (CTLILTEGDS…GLLDIPGFLI (115 aa)) constitute a Toprim domain. The Mg(2+) site is built by Glu-447, Asp-524, and Asp-526. One can recognise a Topo IIA-type catalytic domain in the interval 690–1159 (IPSVLDGFKP…SAKDLWNNDL (470 aa)). The O-(5'-phospho-DNA)-tyrosine intermediate role is filled by Tyr-780. The interaction with DNA stretch occupies residues 963–972 (KLISPISLQN). The span at 1079–1089 (EDEDEDLEESE) shows a compositional bias: acidic residues. 4 disordered regions span residues 1079–1106 (EDEDEDLEESEEATRKKDKDDESTVNGP), 1183–1215 (KTKGGKRKRKGGDDDDYDPSGKKKPARRIKKIK), 1230–1287 (KIKA…DESG), and 1303–1406 (DEDA…FNDE). Over residues 1090–1100 (EATRKKDKDDE) the composition is skewed to basic and acidic residues. The segment covering 1204–1214 (KKKPARRIKKI) has biased composition (basic residues). A compositionally biased stretch (polar residues) spans 1261–1274 (DVTSNASTPSTTIF). Basic residues predominate over residues 1326–1336 (AKKKAPPKRKA). 2 stretches are compositionally biased toward acidic residues: residues 1341–1359 (SSEDELSDANLSEQDDEEV) and 1381–1406 (EISDEEDFIDDDEDEEVDSDESFNDE).

It belongs to the type II topoisomerase family. As to quaternary structure, homodimer. Requires Mg(2+) as cofactor. The cofactor is Mn(2+). Ca(2+) is required as a cofactor.

It localises to the nucleus. It catalyses the reaction ATP-dependent breakage, passage and rejoining of double-stranded DNA.. Control of topological states of DNA by transient breakage and subsequent rejoining of DNA strands. Topoisomerase II makes double-strand breaks. In Candida glabrata (strain ATCC 2001 / BCRC 20586 / JCM 3761 / NBRC 0622 / NRRL Y-65 / CBS 138) (Yeast), this protein is DNA topoisomerase 2 (TOP2).